The chain runs to 393 residues: Sugar efflux transporter B (393 aa).

12 helical membrane passes run phenylalanine 13–leucine 33, alanine 51–leucine 71, lysine 82–asparagine 102, phenylalanine 106–methionine 126, valine 152–phenylalanine 172, valine 174–leucine 194, leucine 219–methionine 239, leucine 253–glycine 273, phenylalanine 283–histidine 303, valine 306–glycine 326, leucine 344–alanine 364, and isoleucine 366–cysteine 386.

Belongs to the major facilitator superfamily. Set transporter family.

The protein localises to the cell inner membrane. In terms of biological role, involved in the efflux of sugars. The physiological role may be the detoxification of non-metabolizable sugar analogs. Can transport lactose and glucose. The polypeptide is Sugar efflux transporter B (setB) (Escherichia coli (strain K12)).